Here is a 477-residue protein sequence, read N- to C-terminus: Cysteine--tRNA ligase (477 aa).

Cys28 serves as a coordination point for Zn(2+). Positions 30-40 match the 'HIGH' region motif; it reads PTVYDYAHIGN. Cys213, His238, and Glu242 together coordinate Zn(2+). Positions 270 to 274 match the 'KMSKS' region motif; that stretch reads KMSKS. Lys273 serves as a coordination point for ATP.

This sequence belongs to the class-I aminoacyl-tRNA synthetase family. In terms of assembly, monomer. The cofactor is Zn(2+).

The protein resides in the cytoplasm. It catalyses the reaction tRNA(Cys) + L-cysteine + ATP = L-cysteinyl-tRNA(Cys) + AMP + diphosphate. The sequence is that of Cysteine--tRNA ligase (cysS) from Chlamydia trachomatis serovar D (strain ATCC VR-885 / DSM 19411 / UW-3/Cx).